We begin with the raw amino-acid sequence, 249 residues long: tRNA (guanine-N(1)-)-methyltransferase (249 aa).

S-adenosyl-L-methionine-binding positions include Gly113 and 133–138; that span reads LGDFVL.

It belongs to the RNA methyltransferase TrmD family. Homodimer.

The protein localises to the cytoplasm. It carries out the reaction guanosine(37) in tRNA + S-adenosyl-L-methionine = N(1)-methylguanosine(37) in tRNA + S-adenosyl-L-homocysteine + H(+). Functionally, specifically methylates guanosine-37 in various tRNAs. The polypeptide is tRNA (guanine-N(1)-)-methyltransferase (Leptothrix cholodnii (strain ATCC 51168 / LMG 8142 / SP-6) (Leptothrix discophora (strain SP-6))).